A 495-amino-acid polypeptide reads, in one-letter code: Bile acid-sensitive ion channel (495 aa).

Residues 1–30 (MEHTEKSQVHAEKGLLGKIKRYLSKRPLPS) form a binds the plasma membrane and stabilizes the channel in the closed state region. The Cytoplasmic portion of the chain corresponds to 1-61 (MEHTEKSQVH…NIAQNQNKVR (61 aa)). Residues 62-82 (KVIWLAVVLGSVSLLVWQIYS) traverse the membrane as a helical segment. Residues 83–459 (RLVNYFTWPT…GLFCGASLIT (377 aa)) are Extracellular-facing. 6 cysteine pairs are disulfide-bonded: Cys-112-Cys-207, Cys-185-Cys-192, Cys-298-Cys-377, Cys-315-Cys-373, Cys-328-Cys-350, and Cys-330-Cys-342. N-linked (GlcNAc...) asparagine glycans are attached at residues Asn-147, Asn-163, and Asn-179. N-linked (GlcNAc...) asparagine glycans are attached at residues Asn-370, Asn-405, and Asn-421. The short motif at 454–456 (GAS) is the GAS motif; ion selectivity filter element. Residues 460–480 (IIEIIEYFFTNFYWVLIFFLL) form a helical membrane-spanning segment. Residues 481–495 (KILETIQRTSPPQAV) lie on the Cytoplasmic side of the membrane.

This sequence belongs to the amiloride-sensitive sodium channel (TC 1.A.6) family. ASIC5 subfamily. As to quaternary structure, forms homotrimeric channels. As to expression, expressed by cholangiocytes (at protein level). Detected in cerebellum, brainstem, kidney, liver, hepatocytes, lung, intestine and embryo. In the cerebellum, restricted to interneurons in the granular layer, specifically in GRM1-expressing unipolar brush cells of the vestibulocerebellum.

The protein resides in the apical cell membrane. It localises to the cell membrane. The enzyme catalyses Na(+)(in) = Na(+)(out). It catalyses the reaction Li(+)(in) = Li(+)(out). The catalysed reaction is K(+)(in) = K(+)(out). It carries out the reaction H(+)(in) = H(+)(out). Its activity is regulated as follows. Inhibited by the diuretic drug amiloride. Contrary to its rat ortholog it is not inhibited by Ca(2+). In terms of biological role, forms bile acid-gated sodium channels and may play a role in bile acid-dependent absorption and secretion by epithelial cells of the bile ducts. Displays high selectivity for sodium ions but can also permit the permeation of other cations. The gating could be indirect and the consequence of alterations of the membrane environment of the channel by bile acids. As a sodium channel of type II unipolar brush cells of the vestibulocerebellum, controlling the electrical activity of these cells, could play a role in motor coordination and balance. This Mus musculus (Mouse) protein is Bile acid-sensitive ion channel.